A 124-amino-acid chain; its full sequence is Small ribosomal subunit protein uS12 (124 aa).

The segment at 1-24 (MPTINQLIKKPRKSQKEKTASPAL) is disordered. D89 bears the 3-methylthioaspartic acid mark.

This sequence belongs to the universal ribosomal protein uS12 family. In terms of assembly, part of the 30S ribosomal subunit. Contacts proteins S8 and S17. May interact with IF1 in the 30S initiation complex.

Its function is as follows. With S4 and S5 plays an important role in translational accuracy. Functionally, interacts with and stabilizes bases of the 16S rRNA that are involved in tRNA selection in the A site and with the mRNA backbone. Located at the interface of the 30S and 50S subunits, it traverses the body of the 30S subunit contacting proteins on the other side and probably holding the rRNA structure together. The combined cluster of proteins S8, S12 and S17 appears to hold together the shoulder and platform of the 30S subunit. In Borrelia hermsii (strain HS1 / DAH), this protein is Small ribosomal subunit protein uS12.